The primary structure comprises 61 residues: UPF0434 protein PFLU_3771 (61 aa).

The protein belongs to the UPF0434 family.

The protein is UPF0434 protein PFLU_3771 of Pseudomonas fluorescens (strain SBW25).